Consider the following 151-residue polypeptide: Desiccation-related protein PCC27-45 (151 aa).

This sequence belongs to the LEA type 2 family.

This is Desiccation-related protein PCC27-45 from Craterostigma plantagineum (Blue gem).